The following is an 85-amino-acid chain: MKVTLIAILTCAAVLVLHTTAAEELEAESQLMEVGMPDTELAAVDEERLFECSVSCEIEKEGNEDCKKKKCKGGWKCKFNMCVKV.

The first 22 residues, 1–22 (MKVTLIAILTCAAVLVLHTTAA), serve as a signal peptide directing secretion. A propeptide spanning residues 23–48 (EELEAESQLMEVGMPDTELAAVDEER) is cleaved from the precursor. Cystine bridges form between Cys52/Cys66, Cys56/Cys77, and Cys71/Cys82.

It belongs to the neurotoxin 12 (Hwtx-2) family. 02 (Hwtx-2) subfamily. In terms of tissue distribution, expressed by the venom gland.

The protein resides in the secreted. Functionally, postsynaptic neurotoxin. The polypeptide is U4-theraphotoxin-Hhn1t (Cyriopagopus hainanus (Chinese bird spider)).